The sequence spans 404 residues: Multidrug resistance protein MdtH (404 aa).

At 1–12 the chain is on the cytoplasmic side; the sequence is MSRVSQARNLGK. The chain crosses the membrane as a helical span at residues 13-33; the sequence is YFLLIDNMLVVLGFFVVFPLI. Topologically, residues 34–98 are periplasmic; it reads SIRFVDQMGW…GFATMGIAHE (65 aa). A helical membrane pass occupies residues 99–116; the sequence is PWLLWFSCFLSGLGGTLF. At 117–138 the chain is on the cytoplasmic side; that stretch reads DPPRSALVVKLIRPEQRGRFFS. A helical transmembrane segment spans residues 139-159; sequence LLMMQDSAGAVIGALLGSWLL. At 160–164 the chain is on the periplasmic side; that stretch reads QYDFR. A helical transmembrane segment spans residues 165 to 185; the sequence is LVCAMGAILFIVCAIFNAWLL. The Cytoplasmic portion of the chain corresponds to 186-213; sequence PAWKLSTVRTPVREGMRRVISDKRFVTY. A helical transmembrane segment spans residues 214–234; it reads VLTLAGYYMLAVQVMLMLPIM. Over 235–243 the chain is Periplasmic; that stretch reads VNDVAGSPA. Residues 244 to 264 traverse the membrane as a helical segment; the sequence is AVKWMYAIEACLSLTLLYPIA. The Cytoplasmic portion of the chain corresponds to 265-276; it reads RWSEKRFRLEHR. A helical membrane pass occupies residues 277–297; it reads LMAGLLIMSLSMIPIGLAGNL. Topologically, residues 298–299 are periplasmic; that stretch reads QQ. A helical transmembrane segment spans residues 300-320; it reads LFTLICAFYIGSVIAEPARET. Residues 321-339 lie on the Cytoplasmic side of the membrane; it reads LSASLTDARARGSYMGFSR. The helical transmembrane segment at 340–360 threads the bilayer; sequence LGLAIGGAIGYIGGGWLFDMG. The Periplasmic segment spans residues 361-367; the sequence is KTLAQPE. Residues 368–388 traverse the membrane as a helical segment; it reads LPWMMLGIIGFITFLALGWQF. Topologically, residues 389–404 are cytoplasmic; that stretch reads SHKRTPRQYTGARRLI.

This sequence belongs to the major facilitator superfamily. DHA1 family. MdtH (TC 2.A.1.2.21) subfamily.

It localises to the cell inner membrane. This Salmonella arizonae (strain ATCC BAA-731 / CDC346-86 / RSK2980) protein is Multidrug resistance protein MdtH.